An 807-amino-acid polypeptide reads, in one-letter code: Leucine-rich repeat-containing protein 41 (807 aa).

Positions 45-54 (ALFELCGRAV) are interaction with Elongin BC complex. Residues S155, S276, and S326 each carry the phosphoserine modification. Disordered stretches follow at residues 269–290 (ASRG…RRPR), 304–335 (TRRK…AIGG), and 349–403 (ASGT…GSGA). The residue at position 327 (T327) is a Phosphothreonine. The span at 352–381 (TKQPSAPAAASASSSTSSKRAPASSASQPK) shows a compositional bias: low complexity. At S368 the chain carries Phosphoserine. The segment covering 382-396 (PLKRFKRAAGKKGPR) has biased composition (basic residues). LRR repeat units lie at residues 482–502 (WVSL…IFRL), 513–525 (AGCR…LSDL), 526–550 (FSPL…VLSI), 608–632 (SGSL…LVLQ), 638–661 (NLSL…VLFL), 696–723 (NSTL…VFSE), and 726–747 (SSSL…LLEF).

In terms of assembly, part of an E3 ubiquitin-protein ligase complex with Elongin BC (ELOB and ELOC), RBX1 and CUL5. Component of a probable ECS(LRRC41) complex which contains CUL5, RNF7/RBX2, Elongin BC and LRRC41. Interacts with CUL5, RNF7, ELOB and ELOC.

Its pathway is protein modification; protein ubiquitination. Its function is as follows. Probable substrate recognition component of an ECS (Elongin BC-CUL2/5-SOCS-box protein) E3 ubiquitin ligase complex which mediates the ubiquitination and subsequent proteasomal degradation of target proteins. This chain is Leucine-rich repeat-containing protein 41 (Lrrc41), found in Mus musculus (Mouse).